Reading from the N-terminus, the 162-residue chain is NADH-quinone oxidoreductase subunit I (162 aa).

4Fe-4S ferredoxin-type domains lie at 54–83 (RRYE…IESE) and 93–122 (TRYD…ETQI). Residues cysteine 63, cysteine 66, cysteine 69, cysteine 73, cysteine 102, cysteine 105, cysteine 108, and cysteine 112 each contribute to the [4Fe-4S] cluster site.

It belongs to the complex I 23 kDa subunit family. In terms of assembly, NDH-1 is composed of 14 different subunits. Subunits NuoA, H, J, K, L, M, N constitute the membrane sector of the complex. Requires [4Fe-4S] cluster as cofactor.

Its subcellular location is the cell inner membrane. The catalysed reaction is a quinone + NADH + 5 H(+)(in) = a quinol + NAD(+) + 4 H(+)(out). Its function is as follows. NDH-1 shuttles electrons from NADH, via FMN and iron-sulfur (Fe-S) centers, to quinones in the respiratory chain. The immediate electron acceptor for the enzyme in this species is believed to be ubiquinone. Couples the redox reaction to proton translocation (for every two electrons transferred, four hydrogen ions are translocated across the cytoplasmic membrane), and thus conserves the redox energy in a proton gradient. The sequence is that of NADH-quinone oxidoreductase subunit I from Burkholderia cenocepacia (strain ATCC BAA-245 / DSM 16553 / LMG 16656 / NCTC 13227 / J2315 / CF5610) (Burkholderia cepacia (strain J2315)).